A 692-amino-acid chain; its full sequence is Elongation factor G (692 aa).

The tr-type G domain maps to 9 to 284; sequence EKIRNIGIMA…AVVDYLPSPV (276 aa). Residues 18 to 25, 82 to 86, and 136 to 139 contribute to the GTP site; these read AHIDAGKT, DTPGH, and NKMD.

Belongs to the TRAFAC class translation factor GTPase superfamily. Classic translation factor GTPase family. EF-G/EF-2 subfamily.

The protein localises to the cytoplasm. Functionally, catalyzes the GTP-dependent ribosomal translocation step during translation elongation. During this step, the ribosome changes from the pre-translocational (PRE) to the post-translocational (POST) state as the newly formed A-site-bound peptidyl-tRNA and P-site-bound deacylated tRNA move to the P and E sites, respectively. Catalyzes the coordinated movement of the two tRNA molecules, the mRNA and conformational changes in the ribosome. The chain is Elongation factor G from Neorickettsia sennetsu (strain ATCC VR-367 / Miyayama) (Ehrlichia sennetsu).